We begin with the raw amino-acid sequence, 372 residues long: DNA replication and repair protein RecF (372 aa).

An ATP-binding site is contributed by 30–37 (GENGQGKT).

It belongs to the RecF family.

Its subcellular location is the cytoplasm. The RecF protein is involved in DNA metabolism; it is required for DNA replication and normal SOS inducibility. RecF binds preferentially to single-stranded, linear DNA. It also seems to bind ATP. The protein is DNA replication and repair protein RecF of Anaeromyxobacter sp. (strain K).